Consider the following 325-residue polypeptide: Acetyl-coenzyme A carboxylase carboxyl transferase subunit alpha (325 aa).

The CoA carboxyltransferase C-terminal domain occupies 35–292 (EIEKLEARLA…DRVLRRSLKQ (258 aa)).

This sequence belongs to the AccA family. As to quaternary structure, acetyl-CoA carboxylase is a heterohexamer composed of biotin carboxyl carrier protein (AccB), biotin carboxylase (AccC) and two subunits each of ACCase subunit alpha (AccA) and ACCase subunit beta (AccD).

The protein localises to the cytoplasm. It carries out the reaction N(6)-carboxybiotinyl-L-lysyl-[protein] + acetyl-CoA = N(6)-biotinyl-L-lysyl-[protein] + malonyl-CoA. It participates in lipid metabolism; malonyl-CoA biosynthesis; malonyl-CoA from acetyl-CoA: step 1/1. In terms of biological role, component of the acetyl coenzyme A carboxylase (ACC) complex. First, biotin carboxylase catalyzes the carboxylation of biotin on its carrier protein (BCCP) and then the CO(2) group is transferred by the carboxyltransferase to acetyl-CoA to form malonyl-CoA. This chain is Acetyl-coenzyme A carboxylase carboxyl transferase subunit alpha, found in Geobacillus kaustophilus (strain HTA426).